Consider the following 312-residue polypeptide: Olfactory receptor 51B2 (312 aa).

Residues 1 to 23 lie on the Extracellular side of the membrane; the sequence is MWPNITAAPFLLTGFPGLEAAHH. N-linked (GlcNAc...) asparagine glycosylation is present at asparagine 4. Residues 24–44 traverse the membrane as a helical segment; sequence WISIPFFAVYVCILLGNGMLL. Over 45–52 the chain is Cytoplasmic; the sequence is YLIKHDHS. The helical transmembrane segment at 53 to 73 threads the bilayer; it reads LHEPMYYFLTMLAGTDLMVTL. The Extracellular segment spans residues 74-97; that stretch reads TTMPTVMGILWVNHREISSVGCFL. Cysteine 95 and cysteine 187 form a disulfide bridge. The chain crosses the membrane as a helical span at residues 98–118; it reads QAYFIHSLSVVESGSLLAMAY. Over 119 to 137 the chain is Cytoplasmic; sequence DCFIAIRNPLRYASILTNT. Residues 138–158 form a helical membrane-spanning segment; it reads RVIALGVGVFLRGFVSILPVI. Residues 159 to 194 are Extracellular-facing; the sequence is LRLFSFSYCKSHVITRAFCLHQEIMRLACADITFNR. A helical transmembrane segment spans residues 195-215; sequence LYPVILISLTIFLDCLIILFS. Residues 216-235 lie on the Cytoplasmic side of the membrane; sequence YILILNTVIGIASGEERAKA. Residues 236–256 traverse the membrane as a helical segment; the sequence is LNTCISHISCVLIFYVTVMGL. The Extracellular segment spans residues 257–271; the sequence is TFIYRFGKNVPEVVH. A helical membrane pass occupies residues 272–292; that stretch reads IIMSYIYFLFPPLMNPVIYSI. Over 293 to 312 the chain is Cytoplasmic; it reads KTKQIQYGIIRLLSKHRFSS.

The protein belongs to the G-protein coupled receptor 1 family. Post-translationally, ubiquitinated by the CRL2(FEM1A) and CRL2(FEM1C) complexes, which recognize the -Lys-Xaa-Xaa-Arg C-degron at the C-terminus, leading to its degradation.

It localises to the cell membrane. Functionally, odorant receptor. The polypeptide is Olfactory receptor 51B2 (OR51B2) (Homo sapiens (Human)).